The following is a 255-amino-acid chain: Developmental and secondary metabolism regulator MVE1 (255 aa).

In terms of domain architecture, Velvet spans 31–226 (GRKLTYRMSV…AEQGCRVRIR (196 aa)). A Nuclear localization signal motif is present at residues 45–50 (VRARAC). 2 disordered regions span residues 163-184 (CKSP…DAHV) and 229-255 (VRMR…QARA). A compositionally biased stretch (acidic residues) spans 245–255 (NYEDETAQARA).

The protein belongs to the velvet family. VeA subfamily. Component of the heterotrimeric velvet complex composed of LAE1, MVE1 and VEL2; MVE1 acting as a bridging protein between LAE1 and VEL2.

It is found in the nucleus. The protein resides in the cytoplasm. Component of the velvet transcription factor complex that controls sexual/asexual developmental ratio in response to light, promoting sexual development in the darkness while stimulating asexual sporulation under illumination. The velvet complex hat acts as a global regulator for secondary metabolite gene expression. Controls the expression of the melanin gene cluster. Mediates the light-stimulated formation of aerial mycelia. The polypeptide is Developmental and secondary metabolism regulator MVE1 (Zymoseptoria tritici (strain CBS 115943 / IPO323) (Speckled leaf blotch fungus)).